A 367-amino-acid polypeptide reads, in one-letter code: Homoserine O-acetyltransferase (367 aa).

An AB hydrolase-1 domain is found at 44–350 (NAIMVTHAWT…AYGHDAFLLE (307 aa)). S150 serves as the catalytic Nucleophile. A substrate-binding site is contributed by R217. Active-site residues include D311 and H344. D345 serves as a coordination point for substrate.

Belongs to the AB hydrolase superfamily. MetX family. Homodimer.

The protein localises to the cytoplasm. The catalysed reaction is L-homoserine + acetyl-CoA = O-acetyl-L-homoserine + CoA. It participates in amino-acid biosynthesis; L-methionine biosynthesis via de novo pathway; O-acetyl-L-homoserine from L-homoserine: step 1/1. Transfers an acetyl group from acetyl-CoA to L-homoserine, forming acetyl-L-homoserine. The polypeptide is Homoserine O-acetyltransferase (Geotalea daltonii (strain DSM 22248 / JCM 15807 / FRC-32) (Geobacter daltonii)).